The primary structure comprises 59 residues: Light-harvesting protein B-800-850 alpha chain E (59 aa).

Topologically, residues 1-11 (MNQGRIWTVVK) are cytoplasmic. The chain crosses the membrane as a helical span at residues 12-35 (PTVGLPLLLGSVTVIAILVHFAVL). His-31 is a binding site for a bacteriochlorophyll. At 36–59 (SNTTWFSKYWNGKAAAIESSVSIG) the chain is on the periplasmic side.

This sequence belongs to the antenna complex alpha subunit family. The core complex is formed by different alpha and beta chains, binding bacteriochlorophyll molecules, and arranged most probably in tetrameric structures disposed around the reaction center. The non-pigmented gamma chains may constitute additional components.

It localises to the cell inner membrane. In terms of biological role, antenna complexes are light-harvesting systems, which transfer the excitation energy to the reaction centers. This Rhodopseudomonas palustris (strain ATCC BAA-98 / CGA009) protein is Light-harvesting protein B-800-850 alpha chain E (pucAE).